Here is a 257-residue protein sequence, read N- to C-terminus: TLC domain-containing protein 3A (257 aa).

The next 7 membrane-spanning stretches (helical) occupy residues 1–21 (MLLT…LSIW), 42–62 (LVSS…IISC), 71–91 (WLAT…FYAM), 114–134 (LIEN…LVPI), 142–162 (LGDF…FVSL), 181–201 (GILT…FMYW), and 220–240 (LHCN…FSLL). The region spanning 33 to 249 (DDCLTVGTRL…LCKKAARLFD (217 aa)) is the TLC domain.

In terms of assembly, interacts with GGT7 isoform 3 and SLC3A2.

The protein localises to the cell membrane. The sequence is that of TLC domain-containing protein 3A (Tlcd3a) from Mus musculus (Mouse).